The following is a 454-amino-acid chain: Bifunctional protein GlmU (454 aa).

The segment at M1–R226 is pyrophosphorylase. UDP-N-acetyl-alpha-D-glucosamine is bound by residues L8–G11, K22, Q73, G78–T79, Y99–D101, G136, E151, N166, and N224. D101 contributes to the Mg(2+) binding site. N224 is a binding site for Mg(2+). Positions M227 to Q247 are linker. The tract at residues G248 to K454 is N-acetyltransferase. UDP-N-acetyl-alpha-D-glucosamine contacts are provided by R330 and K348. H360 acts as the Proton acceptor in catalysis. UDP-N-acetyl-alpha-D-glucosamine is bound by residues Y363 and N374. Acetyl-CoA contacts are provided by residues A377, N383–Y384, S402, A420, and R437.

In the N-terminal section; belongs to the N-acetylglucosamine-1-phosphate uridyltransferase family. This sequence in the C-terminal section; belongs to the transferase hexapeptide repeat family. As to quaternary structure, homotrimer. The cofactor is Mg(2+).

The protein localises to the cytoplasm. It carries out the reaction alpha-D-glucosamine 1-phosphate + acetyl-CoA = N-acetyl-alpha-D-glucosamine 1-phosphate + CoA + H(+). It catalyses the reaction N-acetyl-alpha-D-glucosamine 1-phosphate + UTP + H(+) = UDP-N-acetyl-alpha-D-glucosamine + diphosphate. It participates in nucleotide-sugar biosynthesis; UDP-N-acetyl-alpha-D-glucosamine biosynthesis; N-acetyl-alpha-D-glucosamine 1-phosphate from alpha-D-glucosamine 6-phosphate (route II): step 2/2. It functions in the pathway nucleotide-sugar biosynthesis; UDP-N-acetyl-alpha-D-glucosamine biosynthesis; UDP-N-acetyl-alpha-D-glucosamine from N-acetyl-alpha-D-glucosamine 1-phosphate: step 1/1. Its pathway is bacterial outer membrane biogenesis; LPS lipid A biosynthesis. Functionally, catalyzes the last two sequential reactions in the de novo biosynthetic pathway for UDP-N-acetylglucosamine (UDP-GlcNAc). The C-terminal domain catalyzes the transfer of acetyl group from acetyl coenzyme A to glucosamine-1-phosphate (GlcN-1-P) to produce N-acetylglucosamine-1-phosphate (GlcNAc-1-P), which is converted into UDP-GlcNAc by the transfer of uridine 5-monophosphate (from uridine 5-triphosphate), a reaction catalyzed by the N-terminal domain. This Pseudomonas aeruginosa (strain ATCC 15692 / DSM 22644 / CIP 104116 / JCM 14847 / LMG 12228 / 1C / PRS 101 / PAO1) protein is Bifunctional protein GlmU.